The primary structure comprises 377 residues: Succinyl-diaminopimelate desuccinylase (377 aa).

A Zn(2+)-binding site is contributed by His67. Asp69 is an active-site residue. Asp100 is a binding site for Zn(2+). The active-site Proton acceptor is Glu134. The Zn(2+) site is built by Glu135, Glu163, and His349.

The protein belongs to the peptidase M20A family. DapE subfamily. In terms of assembly, homodimer. Zn(2+) is required as a cofactor. Requires Co(2+) as cofactor.

The enzyme catalyses N-succinyl-(2S,6S)-2,6-diaminopimelate + H2O = (2S,6S)-2,6-diaminopimelate + succinate. The protein operates within amino-acid biosynthesis; L-lysine biosynthesis via DAP pathway; LL-2,6-diaminopimelate from (S)-tetrahydrodipicolinate (succinylase route): step 3/3. Catalyzes the hydrolysis of N-succinyl-L,L-diaminopimelic acid (SDAP), forming succinate and LL-2,6-diaminopimelate (DAP), an intermediate involved in the bacterial biosynthesis of lysine and meso-diaminopimelic acid, an essential component of bacterial cell walls. The polypeptide is Succinyl-diaminopimelate desuccinylase (Shewanella frigidimarina (strain NCIMB 400)).